A 325-amino-acid polypeptide reads, in one-letter code: Aminotransferase tasG (325 aa).

Gly35 lines the substrate pocket. Residues 89 to 90, Asn143, Tyr174, and 203 to 205 each bind pyridoxal 5'-phosphate; these read TW and SFA. Asn143 serves as a coordination point for substrate. Position 206 is an N6-(pyridoxal phosphate)lysine (Lys206). Residue Arg214 coordinates pyridoxal 5'-phosphate.

It belongs to the class-I pyridoxal-phosphate-dependent aminotransferase family. Homodimer. It depends on pyridoxal 5'-phosphate as a cofactor.

The protein operates within secondary metabolite biosynthesis. Functionally, aminotransferase; part of the gene cluster that mediates the biosynthesis of the tetramic acids Sch210971 and Sch210972, potential anti-HIV fungal natural product that contain a decalin core. The PKS module of tasS together with the enoylreductase tasC catalyze the formation of the polyketide unit which is then conjugated to 4-hydroxyl-4-methyl glutamate (HMG) by the condensation domain of the tasS NRPS module. One unique structural feature of Sch210971 and Sch210972 is the tetramic acid motif proposed to be derived from the non-proteinogenic amino acid HMG, by a Dieckmann-type condensation catalyzed by the reductase domain of tasS. The aldolase tasA catalyzes the aldol condensation of 2 molecules of pyruvic acid to yield the intermediate 4-hydroxyl-4-methyl-2-oxoglutarate (HMOG), which can then be stereoselectively transaminated, may be by tasG, to form HMG. The Diels-Alderase tas3 then uses the Dieckmann product of tasS as substrate and catalyzes the Diels-Alder cycloaddition to form the decalin ring of Sch210971 and Sch210972. The chain is Aminotransferase tasG from Hapsidospora irregularis.